A 584-amino-acid polypeptide reads, in one-letter code: Aspartate--tRNA(Asp/Asn) ligase (584 aa).

L-aspartate is bound at residue Glu-173. Positions 197–200 (QLFK) are aspartate. An L-aspartate-binding site is contributed by Arg-219. Residues 219 to 221 (RDE) and Gln-228 contribute to the ATP site. His-447 serves as a coordination point for L-aspartate. Glu-477 serves as a coordination point for ATP. Arg-484 is a binding site for L-aspartate. 529–532 (GFDR) is a binding site for ATP.

This sequence belongs to the class-II aminoacyl-tRNA synthetase family. Type 1 subfamily. In terms of assembly, homodimer.

The protein resides in the cytoplasm. It catalyses the reaction tRNA(Asx) + L-aspartate + ATP = L-aspartyl-tRNA(Asx) + AMP + diphosphate. Its function is as follows. Aspartyl-tRNA synthetase with relaxed tRNA specificity since it is able to aspartylate not only its cognate tRNA(Asp) but also tRNA(Asn). Reaction proceeds in two steps: L-aspartate is first activated by ATP to form Asp-AMP and then transferred to the acceptor end of tRNA(Asp/Asn). This Campylobacter hominis (strain ATCC BAA-381 / DSM 21671 / CCUG 45161 / LMG 19568 / NCTC 13146 / CH001A) protein is Aspartate--tRNA(Asp/Asn) ligase.